A 463-amino-acid chain; its full sequence is Putative protein FAM90A2P (463 aa).

4 disordered regions span residues 1 to 42, 67 to 115, 150 to 295, and 326 to 365; these read MTAR…DPRL, ALVP…PQRK, MPVH…PAQA, and ALEN…PPHS. Basic and acidic residues-rich tracts occupy residues 74–83, 97–114, and 159–170; these read GKKEGKENLK, NKDK…DPQR, and PCVDPELADRSA. Over residues 180-198 the composition is skewed to low complexity; the sequence is LASLSPLRKASLRSSSSLG.

It belongs to the FAM90 family.

This chain is Putative protein FAM90A2P (FAM90A2P), found in Homo sapiens (Human).